Here is a 424-residue protein sequence, read N- to C-terminus: Tyrosine--tRNA ligase (424 aa).

An L-tyrosine-binding site is contributed by Tyr-37. The 'HIGH' region signature appears at 42–51 (PTADSLHLGH). Residues Tyr-175 and Gln-179 each coordinate L-tyrosine. The 'KMSKS' region signature appears at 235–239 (KFGKT). Lys-238 is a binding site for ATP. The 58-residue stretch at 357–414 (ADLMQALVDAELQPSRGQARKTIASNAVTINGEKQSDPEYIFNDEDRLFGRYTLLRRG) folds into the S4 RNA-binding domain.

It belongs to the class-I aminoacyl-tRNA synthetase family. TyrS type 1 subfamily. In terms of assembly, homodimer.

The protein localises to the cytoplasm. It catalyses the reaction tRNA(Tyr) + L-tyrosine + ATP = L-tyrosyl-tRNA(Tyr) + AMP + diphosphate + H(+). In terms of biological role, catalyzes the attachment of tyrosine to tRNA(Tyr) in a two-step reaction: tyrosine is first activated by ATP to form Tyr-AMP and then transferred to the acceptor end of tRNA(Tyr). This is Tyrosine--tRNA ligase from Salmonella agona (strain SL483).